The chain runs to 249 residues: Proteasome subunit alpha type-3 (249 aa).

Belongs to the peptidase T1A family. The 26S proteasome consists of a 20S proteasome core and two 19S regulatory subunits. The 20S proteasome core is composed of 28 subunits that are arranged in four stacked rings, resulting in a barrel-shaped structure. The two end rings are each formed by seven alpha subunits, and the two central rings are each formed by seven beta subunits. The catalytic chamber with the active sites is on the inside of the barrel.

Its subcellular location is the cytoplasm. It localises to the nucleus. Its function is as follows. The proteasome is a multicatalytic proteinase complex which is characterized by its ability to cleave peptides with Arg, Phe, Tyr, Leu, and Glu adjacent to the leaving group at neutral or slightly basic pH. The proteasome has an ATP-dependent proteolytic activity. This chain is Proteasome subunit alpha type-3 (PAG1), found in Spinacia oleracea (Spinach).